The chain runs to 474 residues: Aspartate ammonia-lyase (474 aa).

Residues threonine 105, serine 144, threonine 145, asparagine 146, and threonine 191 each contribute to the L-aspartate site. The tract at residues 322 to 331 is SS loop; it reads GSSIMPGKVN. Serine 323 (proton acceptor) is an active-site residue. The L-aspartate site is built by serine 324 and lysine 329.

It belongs to the class-II fumarase/aspartase family. Aspartase subfamily. Homotetramer.

The enzyme catalyses L-aspartate = fumarate + NH4(+). Its function is as follows. Lyase involved in the degradation of canavanine, the delta-oxa-analog of arginine, allowing growth on canavanine as sole nitrogen and carbon source. Probably catalyzes the conversion of L-aspartate to fumarate and ammonia. This Pseudomonas canavaninivorans protein is Aspartate ammonia-lyase.